We begin with the raw amino-acid sequence, 1627 residues long: Pleckstrin homology domain-containing family G member 4B (1627 aa).

Disordered regions lie at residues 211–349 (YSSC…VQPR), 381–475 (LTGA…GQAV), 501–537 (VSTDGGSLHCHNPSGPSDVPARQPHPEQEGWPPGTGD), 959–1008 (SEAA…PAQP), 1049–1111 (TTAH…SKGL), and 1124–1159 (PLWQHARSPPVTQSRSLSSPSGLHPAEEDGRQQVGS). Positions 241-251 (GSASCPDTLTS) are enriched in polar residues. Basic and acidic residues-rich tracts occupy residues 262-273 (QLRHLPYPERAE) and 310-322 (ERPDPMDQEDRPK). Residues 465–474 (RPGGHLGGQA) show a composition bias toward gly residues. Residues 975–985 (PKHERAQEAMR) show a composition bias toward basic and acidic residues. Over residues 1057–1068 (SACSSEPTQTLA) the composition is skewed to polar residues. Residues 1070 to 1081 (RPRKHPQKKMIK) show a composition bias toward basic residues. Composition is skewed to polar residues over residues 1101 to 1111 (PDHTSVFSKGL) and 1133 to 1144 (PVTQSRSLSSPS). Positions 1161–1340 (RLRHIMAEMI…CFQLRHGNDL (180 aa)) constitute a DH domain. In terms of domain architecture, PH spans 1352–1460 (NLKEQGQLRC…WTDVIGRILW (109 aa)). Positions 1519–1558 (KGTESQMRGSTAVSSSDHAAPFKRPHSTISDSSTSSSSSQ) are disordered. Residues 1521-1535 (TESQMRGSTAVSSSD) show a composition bias toward polar residues. Over residues 1545–1558 (STISDSSTSSSSSQ) the composition is skewed to low complexity.

Found in a complex with ARHGEF11 and ARHGEF12; binding to ARHGEF11 and ARHGEF12 enhances CDC42 GEF activity of PLEKHG4B, and PLEKHG4B, in turn, inhibits ARHGEF11- and ARHGEF12-mediated RHOA activation. Interacts with ANXA2; this interaction is required for PLEKHG4B localization to cell-cell adhesions.

It is found in the basal cell membrane. The protein localises to the cell junction. It localises to the nucleus. The protein resides in the cytoplasm. Guanine nucleotide exchange factor (GEF) which specifically activates small GTPase CDC42 by exchanging bound GDP for free GTP. Plays a role in actin cytoskeletal remodeling in the late stage of cell-cell junction formation by regulating the contractility of actin filaments, which prompts the conversion from 'open' to 'closed' junctions. This Homo sapiens (Human) protein is Pleckstrin homology domain-containing family G member 4B.